The primary structure comprises 472 residues: Ribulose bisphosphate carboxylase large chain 1 (472 aa).

Residues Asn-115 and Thr-165 each coordinate substrate. The active-site Proton acceptor is Lys-167. A substrate-binding site is contributed by Lys-169. Positions 193, 195, and 196 each coordinate Mg(2+). An N6-carboxylysine modification is found at Lys-193. The active-site Proton acceptor is His-286. Residues Arg-287, His-319, and Ser-371 each coordinate substrate.

The protein belongs to the RuBisCO large chain family. Type I subfamily. Heterohexadecamer of 8 large chains and 8 small chains. The cofactor is Mg(2+).

The enzyme catalyses 2 (2R)-3-phosphoglycerate + 2 H(+) = D-ribulose 1,5-bisphosphate + CO2 + H2O. The catalysed reaction is D-ribulose 1,5-bisphosphate + O2 = 2-phosphoglycolate + (2R)-3-phosphoglycerate + 2 H(+). In terms of biological role, ruBisCO catalyzes two reactions: the carboxylation of D-ribulose 1,5-bisphosphate, the primary event in carbon dioxide fixation, as well as the oxidative fragmentation of the pentose substrate. Both reactions occur simultaneously and in competition at the same active site. The chain is Ribulose bisphosphate carboxylase large chain 1 from Rhodopseudomonas palustris (strain BisB5).